The following is a 554-amino-acid chain: CTP synthase (554 aa).

Residues 1-279 (MTSSRKVRPT…DTFIIRRLGL (279 aa)) form an amidoligase domain region. Ser-21 lines the CTP pocket. A UTP-binding site is contributed by Ser-21. ATP-binding positions include 22–27 (SLGKGL) and Asp-79. Residues Asp-79 and Glu-153 each contribute to the Mg(2+) site. Residues 160-162 (DIE), 200-205 (KTKPTQ), and Lys-236 each bind CTP. UTP-binding positions include 200–205 (KTKPTQ) and Lys-236. Residues 304-553 (TVGIVGKYID…VKTALELRVH (250 aa)) enclose the Glutamine amidotransferase type-1 domain. Residue Gly-367 participates in L-glutamine binding. Cys-394 acts as the Nucleophile; for glutamine hydrolysis in catalysis. L-glutamine contacts are provided by residues 395 to 398 (LGLQ), Glu-417, and Arg-478. Active-site residues include His-526 and Glu-528.

Belongs to the CTP synthase family. As to quaternary structure, homotetramer.

The catalysed reaction is UTP + L-glutamine + ATP + H2O = CTP + L-glutamate + ADP + phosphate + 2 H(+). It catalyses the reaction L-glutamine + H2O = L-glutamate + NH4(+). It carries out the reaction UTP + NH4(+) + ATP = CTP + ADP + phosphate + 2 H(+). Its pathway is pyrimidine metabolism; CTP biosynthesis via de novo pathway; CTP from UDP: step 2/2. Its activity is regulated as follows. Allosterically activated by GTP, when glutamine is the substrate; GTP has no effect on the reaction when ammonia is the substrate. The allosteric effector GTP functions by stabilizing the protein conformation that binds the tetrahedral intermediate(s) formed during glutamine hydrolysis. Inhibited by the product CTP, via allosteric rather than competitive inhibition. Catalyzes the ATP-dependent amination of UTP to CTP with either L-glutamine or ammonia as the source of nitrogen. Regulates intracellular CTP levels through interactions with the four ribonucleotide triphosphates. The protein is CTP synthase of Corynebacterium glutamicum (strain R).